Here is a 448-residue protein sequence, read N- to C-terminus: Histidine--tRNA ligase (448 aa).

This sequence belongs to the class-II aminoacyl-tRNA synthetase family. As to quaternary structure, homodimer.

Its subcellular location is the cytoplasm. The enzyme catalyses tRNA(His) + L-histidine + ATP = L-histidyl-tRNA(His) + AMP + diphosphate + H(+). The polypeptide is Histidine--tRNA ligase (Treponema denticola (strain ATCC 35405 / DSM 14222 / CIP 103919 / JCM 8153 / KCTC 15104)).